Reading from the N-terminus, the 110-residue chain is uncharacterized protein (110 aa).

This is an uncharacterized protein from Microplitis demolitor bracovirus (isolate Webb) (MdBV).